A 193-amino-acid polypeptide reads, in one-letter code: Interferon epsilon (193 aa).

A signal peptide spans Met1–Ser21. The cysteines at positions 53 and 163 are disulfide-linked. Asn139 carries N-linked (GlcNAc...) asparagine glycosylation.

It belongs to the alpha/beta interferon family.

The protein localises to the secreted. Functionally, type I interferon required for maintaining basal levels of IFN-regulated genes, including 2'-5'-oligoadenylate synthetase, IRF7 and ISG15, in the female reproductive tract. Directly mediates protection against viral and bacterial genital infections. The chain is Interferon epsilon (IFNE) from Sus scrofa (Pig).